We begin with the raw amino-acid sequence, 414 residues long: Serine-type anaerobic sulfatase-maturating enzyme (414 aa).

One can recognise a Radical SAM core domain in the interval 5-250 (TYAPFAKPLY…LCTIFDEWVK (246 aa)). Cys24 and Cys28 together coordinate [4Fe-4S] cluster. Tyr30 serves as a coordination point for S-adenosyl-L-methionine. Cys31 is a binding site for [4Fe-4S] cluster. 3 residues coordinate S-adenosyl-L-methionine: Gly76, Ser131, and Arg143. [4Fe-4S] cluster-binding residues include Cys276, Cys282, and Cys297. The Proton acceptor role is filled by Asp298. Cys339, Cys342, Cys348, Cys352, and Cys371 together coordinate [4Fe-4S] cluster.

The protein belongs to the radical SAM superfamily. Anaerobic sulfatase-maturating enzyme family. Requires [4Fe-4S] cluster as cofactor.

It carries out the reaction L-seryl-[sulfatase] + S-adenosyl-L-methionine = 3-oxo-L-alanyl-[sulfatase] + 5'-deoxyadenosine + L-methionine + H(+). Its pathway is protein modification; sulfatase oxidation. Functionally, involved in 'Ser-type' sulfatase maturation under anaerobic conditions. Links the heparin and the chondroitin sulfate utilization pathways which contribute to the colonization of the intestinal tract. May catalyze the activation of chondro-6-sulfatase, i.e. the post-translational modification of a specific serine residue into 3-oxoalanine (also known as C(alpha)-formylglycine (FGly)), by a free radical chemical mechanism initiated via the reductive cleavage of S-adenosyl-L-methionine (SAM). Is also able to oxidize a cysteine residue in a synthetic substrate to FGly in vitro, but not in a recombinant Cys-type sulfatase in vivo. But since B.thetaiotaomicron possesses only Ser-type sulfatases, the oxidation of serine residues to FGly is the sole physiological activity. In Bacteroides thetaiotaomicron (strain ATCC 29148 / DSM 2079 / JCM 5827 / CCUG 10774 / NCTC 10582 / VPI-5482 / E50), this protein is Serine-type anaerobic sulfatase-maturating enzyme (chuR).